Consider the following 484-residue polypeptide: Phosphoenolpyruvate carboxylase (484 aa).

It belongs to the PEPCase type 2 family. As to quaternary structure, homotetramer. Requires Mg(2+) as cofactor.

The catalysed reaction is oxaloacetate + phosphate = phosphoenolpyruvate + hydrogencarbonate. In terms of biological role, catalyzes the irreversible beta-carboxylation of phosphoenolpyruvate (PEP) to form oxaloacetate (OAA), a four-carbon dicarboxylic acid source for the tricarboxylic acid cycle. This is Phosphoenolpyruvate carboxylase from Methanospirillum hungatei JF-1 (strain ATCC 27890 / DSM 864 / NBRC 100397 / JF-1).